We begin with the raw amino-acid sequence, 124 residues long: Large ribosomal subunit protein bL12 (124 aa).

This sequence belongs to the bacterial ribosomal protein bL12 family. In terms of assembly, homodimer. Part of the ribosomal stalk of the 50S ribosomal subunit. Forms a multimeric L10(L12)X complex, where L10 forms an elongated spine to which 2 to 4 L12 dimers bind in a sequential fashion. Binds GTP-bound translation factors.

Forms part of the ribosomal stalk which helps the ribosome interact with GTP-bound translation factors. Is thus essential for accurate translation. This is Large ribosomal subunit protein bL12 from Leptothrix cholodnii (strain ATCC 51168 / LMG 8142 / SP-6) (Leptothrix discophora (strain SP-6)).